Here is a 172-residue protein sequence, read N- to C-terminus: MAKLTILVALALFLLAAHASARQQWELQGDRRCQSQLERANLRPCEQHLMQKIQRDEDSYGRDPYSPSQDPYSPSQDPDRRDPYSPSPYDRRGAGSSQHQERCCNELNEFENNQRCMCEALQQIMENQSDRLQGRQQEQQFKRELRNLPQQCGLRAPQRCDLEVESGGRDRY.

Positions 1 to 21 (MAKLTILVALALFLLAAHASA) are cleaved as a signal peptide. 4 cysteine pairs are disulfide-bonded: Cys-33–Cys-116, Cys-45–Cys-103, Cys-104–Cys-152, and Cys-118–Cys-160. The interval 54 to 98 (QRDEDSYGRDPYSPSQDPYSPSQDPDRRDPYSPSPYDRRGAGSSQ) is disordered. Residues 62-76 (RDPYSPSQDPYSPSQ) show a composition bias toward low complexity. 4-hydroxyproline occurs at positions 67, 74, and 86. The span at 77–98 (DPDRRDPYSPSPYDRRGAGSSQ) shows a compositional bias: basic and acidic residues.

It belongs to the 2S seed storage albumins family. Post-translationally, the hydroxyproline modifications determined by mass spectrometry are probably 4-hydroxyproline as determined for other extracellular plant proteins. As to expression, expressed in seeds, not expressed in leaves, roots and pegs.

In terms of biological role, weak inhibitor of trypsin. This chain is Conglutin-7, found in Arachis hypogaea (Peanut).